We begin with the raw amino-acid sequence, 506 residues long: Pyruvate kinase 2 (506 aa).

A Phosphoserine modification is found at serine 24. Arginine 51 contacts substrate. K(+) is bound by residues asparagine 53, serine 55, aspartate 86, and threonine 87. 53-56 (NFSH) serves as a coordination point for ATP. Residues arginine 93 and lysine 179 each contribute to the ATP site. Glutamate 244 contributes to the Mg(2+) binding site. Substrate-binding residues include glycine 267, aspartate 268, and threonine 300. Aspartate 268 contacts Mg(2+).

The protein belongs to the pyruvate kinase family. In terms of assembly, homotetramer. Mg(2+) serves as cofactor. Requires K(+) as cofactor.

It catalyses the reaction pyruvate + ATP = phosphoenolpyruvate + ADP + H(+). It participates in carbohydrate degradation; glycolysis; pyruvate from D-glyceraldehyde 3-phosphate: step 5/5. Its activity is regulated as follows. Not activated by fructose-1,6-bisphosphate. Its function is as follows. May be used by cells under conditions in which the level of glycolytic flux is very low. The protein is Pyruvate kinase 2 (PYK2) of Saccharomyces cerevisiae (strain ATCC 204508 / S288c) (Baker's yeast).